The sequence spans 284 residues: MTSGTRTPTWKERENNKRRERRRRAIAAKIFAGLRIHGNFKLPKHCDNNEVLKALCNEAGWTVEDDGTTYRKGCKPMDRMDLMNGSTSASPCSSYQHSPRASYNPSPSSSSFPSPTNPFGDANSLIPWLKNLSSNSPSKLPFFHGNSISAPVTPPLARSPTRDQVTIPDSGWLSGMQTPQSGPSSPTFSLVSRNPFFDKEAFKMGDCNSPMWTPGQSGNCSPAIPAGVDQNSDVPMADGMTAEFAFGCNAMAANGMVKPWEGERIHGECVSDDLELTLGNSRTR.

Disordered regions lie at residues 1-21 (MTSG…RRER) and 85-116 (GSTS…PSPT). The required for DNA-binding stretch occupies residues 6-88 (RTPTWKEREN…RMDLMNGSTS (83 aa)). Over residues 85–97 (GSTSASPCSSYQH) the composition is skewed to polar residues. Positions 98-114 (SPRASYNPSPSSSSFPS) are enriched in low complexity. Thr153 is subject to Phosphothreonine.

This sequence belongs to the BZR/LAT61 family. Post-translationally, phosphorylated. Phosphorylation increases protein degradation.

This chain is BES1/BZR1 homolog protein 3 (BEH3), found in Arabidopsis thaliana (Mouse-ear cress).